We begin with the raw amino-acid sequence, 260 residues long: Phosphatidylglycerol--prolipoprotein diacylglyceryl transferase (260 aa).

The next 3 helical transmembrane spans lie at 16-36 (LEFR…YFIV), 55-75 (VIFS…ILFY), and 87-107 (LFAV…VILA). Arg-138 serves as a coordination point for a 1,2-diacyl-sn-glycero-3-phospho-(1'-sn-glycerol). The next 2 membrane-spanning stretches (helical) occupy residues 198-218 (GVVF…VEFF) and 232-252 (FSMG…MAVL).

It belongs to the Lgt family.

The protein localises to the cell inner membrane. It catalyses the reaction L-cysteinyl-[prolipoprotein] + a 1,2-diacyl-sn-glycero-3-phospho-(1'-sn-glycerol) = an S-1,2-diacyl-sn-glyceryl-L-cysteinyl-[prolipoprotein] + sn-glycerol 1-phosphate + H(+). It functions in the pathway protein modification; lipoprotein biosynthesis (diacylglyceryl transfer). Catalyzes the transfer of the diacylglyceryl group from phosphatidylglycerol to the sulfhydryl group of the N-terminal cysteine of a prolipoprotein, the first step in the formation of mature lipoproteins. The polypeptide is Phosphatidylglycerol--prolipoprotein diacylglyceryl transferase (Geobacter sulfurreducens (strain ATCC 51573 / DSM 12127 / PCA)).